Here is a 228-residue protein sequence, read N- to C-terminus: Cytochrome c oxidase subunit 2 (228 aa).

Residues 1-26 (MATWANLGLQNSSSPLMEQLNFFHDH) are Mitochondrial intermembrane-facing. The chain crosses the membrane as a helical span at residues 27-48 (TVLILIMITVMITYVMGMLFFN). At 49–62 (KFTNRYLLHGQTIE) the chain is on the mitochondrial matrix side. Residues 63-82 (IIWTILPAIILMFIAFPSLR) traverse the membrane as a helical segment. Residues 83 to 228 (LLYLLDEINS…FIKWVSSQLN (146 aa)) lie on the Mitochondrial intermembrane side of the membrane. Residues His161, Cys196, Glu198, Cys200, His204, and Met207 each coordinate Cu cation. Glu198 serves as a coordination point for Mg(2+).

This sequence belongs to the cytochrome c oxidase subunit 2 family. In terms of assembly, component of the cytochrome c oxidase (complex IV, CIV), a multisubunit enzyme composed of a catalytic core of 3 subunits and several supernumerary subunits. The complex exists as a monomer or a dimer and forms supercomplexes (SCs) in the inner mitochondrial membrane with ubiquinol-cytochrome c oxidoreductase (cytochrome b-c1 complex, complex III, CIII). Requires Cu cation as cofactor.

It localises to the mitochondrion inner membrane. The enzyme catalyses 4 Fe(II)-[cytochrome c] + O2 + 8 H(+)(in) = 4 Fe(III)-[cytochrome c] + 2 H2O + 4 H(+)(out). Its function is as follows. Component of the cytochrome c oxidase, the last enzyme in the mitochondrial electron transport chain which drives oxidative phosphorylation. The respiratory chain contains 3 multisubunit complexes succinate dehydrogenase (complex II, CII), ubiquinol-cytochrome c oxidoreductase (cytochrome b-c1 complex, complex III, CIII) and cytochrome c oxidase (complex IV, CIV), that cooperate to transfer electrons derived from NADH and succinate to molecular oxygen, creating an electrochemical gradient over the inner membrane that drives transmembrane transport and the ATP synthase. Cytochrome c oxidase is the component of the respiratory chain that catalyzes the reduction of oxygen to water. Electrons originating from reduced cytochrome c in the intermembrane space (IMS) are transferred via the dinuclear copper A center (CU(A)) of subunit 2 and heme A of subunit 1 to the active site in subunit 1, a binuclear center (BNC) formed by heme A3 and copper B (CU(B)). The BNC reduces molecular oxygen to 2 water molecules using 4 electrons from cytochrome c in the IMS and 4 protons from the mitochondrial matrix. This is Cytochrome c oxidase subunit 2 (COII) from Culex quinquefasciatus (Southern house mosquito).